The chain runs to 193 residues: MRLCDRDIEAWLDEGRLSITPRPPVERINGATVDVRLGNKFRTFRGHTAAFIDLSGPKDEVSAALDRVMSDEIVLPDGEAFYLHPGELALAVTYESVTLPPDLVGWLDGRSSLARLGLMVHVTAHRIDPGWSGCIVLEFYNSGKLPLALRPGMLIGALSFEPLSGPAARPYNRRQDAKYRDQQGAVASRIDKD.

DCTP contacts are provided by residues 110–115, Asp128, 136–138, Tyr171, Lys178, and Gln182; these read RSSLAR and VLE. Glu138 (proton donor/acceptor) is an active-site residue. A disordered region spans residues 169–193; that stretch reads RPYNRRQDAKYRDQQGAVASRIDKD.

This sequence belongs to the dCTP deaminase family. Homotrimer.

The enzyme catalyses dCTP + H2O + H(+) = dUTP + NH4(+). It participates in pyrimidine metabolism; dUMP biosynthesis; dUMP from dCTP (dUTP route): step 1/2. Catalyzes the deamination of dCTP to dUTP. This chain is dCTP deaminase, found in Salmonella arizonae (strain ATCC BAA-731 / CDC346-86 / RSK2980).